Consider the following 587-residue polypeptide: 2-succinyl-5-enolpyruvyl-6-hydroxy-3-cyclohexene-1-carboxylate synthase (587 aa).

It belongs to the TPP enzyme family. MenD subfamily. As to quaternary structure, homodimer. The cofactor is Mg(2+). Mn(2+) serves as cofactor. Thiamine diphosphate is required as a cofactor.

It catalyses the reaction isochorismate + 2-oxoglutarate + H(+) = 5-enolpyruvoyl-6-hydroxy-2-succinyl-cyclohex-3-ene-1-carboxylate + CO2. Its pathway is quinol/quinone metabolism; 1,4-dihydroxy-2-naphthoate biosynthesis; 1,4-dihydroxy-2-naphthoate from chorismate: step 2/7. It functions in the pathway cofactor biosynthesis; phylloquinone biosynthesis. Catalyzes the thiamine diphosphate-dependent decarboxylation of 2-oxoglutarate and the subsequent addition of the resulting succinic semialdehyde-thiamine pyrophosphate anion to isochorismate to yield 2-succinyl-5-enolpyruvyl-6-hydroxy-3-cyclohexene-1-carboxylate (SEPHCHC). The polypeptide is 2-succinyl-5-enolpyruvyl-6-hydroxy-3-cyclohexene-1-carboxylate synthase (Prochlorococcus marinus (strain AS9601)).